Reading from the N-terminus, the 174-residue chain is Crossover junction endodeoxyribonuclease RuvC (174 aa).

Residues Asp-8, Glu-69, and Asp-141 contribute to the active site. Mg(2+) contacts are provided by Asp-8, Glu-69, and Asp-141.

The protein belongs to the RuvC family. In terms of assembly, homodimer which binds Holliday junction (HJ) DNA. The HJ becomes 2-fold symmetrical on binding to RuvC with unstacked arms; it has a different conformation from HJ DNA in complex with RuvA. In the full resolvosome a probable DNA-RuvA(4)-RuvB(12)-RuvC(2) complex forms which resolves the HJ. Mg(2+) is required as a cofactor.

It localises to the cytoplasm. The catalysed reaction is Endonucleolytic cleavage at a junction such as a reciprocal single-stranded crossover between two homologous DNA duplexes (Holliday junction).. In terms of biological role, the RuvA-RuvB-RuvC complex processes Holliday junction (HJ) DNA during genetic recombination and DNA repair. Endonuclease that resolves HJ intermediates. Cleaves cruciform DNA by making single-stranded nicks across the HJ at symmetrical positions within the homologous arms, yielding a 5'-phosphate and a 3'-hydroxyl group; requires a central core of homology in the junction. The consensus cleavage sequence is 5'-(A/T)TT(C/G)-3'. Cleavage occurs on the 3'-side of the TT dinucleotide at the point of strand exchange. HJ branch migration catalyzed by RuvA-RuvB allows RuvC to scan DNA until it finds its consensus sequence, where it cleaves and resolves the cruciform DNA. The polypeptide is Crossover junction endodeoxyribonuclease RuvC (Xanthomonas campestris pv. campestris (strain 8004)).